A 286-amino-acid chain; its full sequence is Pre-mRNA-processing protein 45 (286 aa).

Disordered stretches follow at residues 111 to 146 (TNDINYIKYENPNPNPNPNPNPNQEQQQQSSSSSSK) and 253 to 286 (KQRNEIRQQKQLQEKRLRDEKIKEIANRSKRRRY). Low complexity predominate over residues 132–145 (PNQEQQQQSSSSSS). The segment covering 253 to 279 (KQRNEIRQQKQLQEKRLRDEKIKEIAN) has biased composition (basic and acidic residues).

This sequence belongs to the SNW family. In terms of assembly, associated with the spliceosome.

The protein localises to the nucleus. In terms of biological role, involved in pre-mRNA splicing. This is Pre-mRNA-processing protein 45 (PRP45) from Candida albicans (strain SC5314 / ATCC MYA-2876) (Yeast).